The chain runs to 109 residues: Small ribosomal subunit protein eS25z (109 aa).

The segment at 1–36 (MAPKKDKVPPPSSKPAKSGGGKQKKKKWSKGKQKEK) is disordered. Positions 22 to 31 (KQKKKKWSKG) are enriched in basic residues.

It belongs to the eukaryotic ribosomal protein eS25 family.

This chain is Small ribosomal subunit protein eS25z (RPS25A), found in Arabidopsis thaliana (Mouse-ear cress).